Reading from the N-terminus, the 1201-residue chain is Period circadian protein homolog 3 (1201 aa).

Residues 1-50 form a disordered region; it reads MPRGEAPGPGRRGAKDEALGEESGERWSPEFHLQRKLADSSHSEQQDRNR. Residues 13-50 show a composition bias toward basic and acidic residues; it reads GAKDEALGEESGERWSPEFHLQRKLADSSHSEQQDRNR. A Nuclear export signal 1 motif is present at residues 55 to 64; the sequence is LIMVVQEMKK. PAS domains are found at residues 121-188 and 262-328; these read IASE…RAQL and YEAP…KVLK. One can recognise a PAC domain in the interval 337-380; that stretch reads HSPIRFCTQNGDYIILDSSWSSFVNPWSRKISFIIGRHKVRTSP. Positions 403–412 match the Nuclear export signal 3 motif; sequence LQEQIYKLLL. A CSNK1E binding domain region spans residues 555 to 760; that stretch reads LKRKCISCTN…SSSNTGSGPR (206 aa). Disordered regions lie at residues 717–788 and 881–923; these read YSYF…FPPA and PSMS…RSSS. A compositionally biased stretch (polar residues) spans 721-731; it reads QGDSTSKQTRS. Positions 729-745 match the Nuclear localization signal motif; it reads TRSAGCRKGKHKRKKLP. Basic residues predominate over residues 733 to 743; sequence GCRKGKHKRKK. Low complexity-rich tracts occupy residues 767 to 783 and 881 to 890; these read AQPC…TSSP and PSMSSAMSPT. The segment covering 900-911 has biased composition (basic and acidic residues); the sequence is QRREEEKWEAQS. Serine 919 is modified (phosphoserine). The Nuclear export signal 2 signature appears at 925 to 932; that stretch reads LQLNLLQE. Residues 952 to 1067 form a disordered region; it reads TEYCVTGNNG…GSAASGSSDS (116 aa). Composition is skewed to polar residues over residues 957-976, 983-994, 1001-1012, and 1035-1050; these read TGNN…STGS, SHPTASALSTGS, and TPSH…GSPP. A run of 5 repeats spans residues 965 to 982, 983 to 1000, 1001 to 1018, 1019 to 1036, and 1037 to 1054. Positions 965 to 1054 are 5 X 18 AA tandem repeats of S-[HP]-[AP]-T-[AT]-[GST]-[ATV]-L-S-[MT]-G-[LS]-P-P-[MRS]-[EKR]-[NST]-P; it reads SPATTGALST…STGSPPSESP (90 aa). Residue serine 994 is modified to Phosphoserine. Phosphoserine is present on serine 1053. Residues 1053-1067 are compositionally biased toward low complexity; the sequence is SPSRTGSAASGSSDS. Positions 1123 to 1201 are CRY binding domain; the sequence is ERVKEVVLKE…CGQVLVEDSC (79 aa).

Homodimer. Component of the circadian core oscillator, which includes the CRY proteins, CLOCK or NPAS2, BMAL1 or BMAL2, CSNK1D and/or CSNK1E, TIMELESS and the PER proteins. Interacts directly with PER1, PER2, CRY1, CRY2, and TIMELESS; interaction with CRY1 and CRY2 is weak and not rhythmic. Interacts with FBXW11 and BTRC. In terms of processing, phosphorylation by CSNK1E is weak and appears to require association with PER1 and translocation to the nucleus. Ubiquitinated.

It localises to the cytoplasm. The protein localises to the nucleus. Functionally, originally described as a core component of the circadian clock. The circadian clock, an internal time-keeping system, regulates various physiological processes through the generation of approximately 24 hour circadian rhythms in gene expression, which are translated into rhythms in metabolism and behavior. It is derived from the Latin roots 'circa' (about) and 'diem' (day) and acts as an important regulator of a wide array of physiological functions including metabolism, sleep, body temperature, blood pressure, endocrine, immune, cardiovascular, and renal function. Consists of two major components: the central clock, residing in the suprachiasmatic nucleus (SCN) of the brain, and the peripheral clocks that are present in nearly every tissue and organ system. Both the central and peripheral clocks can be reset by environmental cues, also known as Zeitgebers (German for 'timegivers'). The predominant Zeitgeber for the central clock is light, which is sensed by retina and signals directly to the SCN. The central clock entrains the peripheral clocks through neuronal and hormonal signals, body temperature and feeding-related cues, aligning all clocks with the external light/dark cycle. Circadian rhythms allow an organism to achieve temporal homeostasis with its environment at the molecular level by regulating gene expression to create a peak of protein expression once every 24 hours to control when a particular physiological process is most active with respect to the solar day. Transcription and translation of core clock components (CLOCK, NPAS2, BMAL1, BMAL2, PER1, PER2, PER3, CRY1 and CRY2) plays a critical role in rhythm generation, whereas delays imposed by post-translational modifications (PTMs) are important for determining the period (tau) of the rhythms (tau refers to the period of a rhythm and is the length, in time, of one complete cycle). A diurnal rhythm is synchronized with the day/night cycle, while the ultradian and infradian rhythms have a period shorter and longer than 24 hours, respectively. Disruptions in the circadian rhythms contribute to the pathology of cardiovascular diseases, cancer, metabolic syndromes and aging. A transcription/translation feedback loop (TTFL) forms the core of the molecular circadian clock mechanism. Transcription factors, CLOCK or NPAS2 and BMAL1 or BMAL2, form the positive limb of the feedback loop, act in the form of a heterodimer and activate the transcription of core clock genes and clock-controlled genes (involved in key metabolic processes), harboring E-box elements (5'-CACGTG-3') within their promoters. The core clock genes: PER1/2/3 and CRY1/2 which are transcriptional repressors form the negative limb of the feedback loop and interact with the CLOCK|NPAS2-BMAL1|BMAL2 heterodimer inhibiting its activity and thereby negatively regulating their own expression. This heterodimer also activates nuclear receptors NR1D1, NR1D2, RORA, RORB and RORG, which form a second feedback loop and which activate and repress BMAL1 transcription, respectively. Has a redundant role with the other PER proteins PER1 and PER2 and is not essential for the circadian rhythms maintenance. In contrast, plays an important role in sleep-wake timing and sleep homeostasis probably through the transcriptional regulation of sleep homeostasis-related genes, without influencing circadian parameters. Can bind heme. The sequence is that of Period circadian protein homolog 3 (PER3) from Homo sapiens (Human).